Consider the following 325-residue polypeptide: Elongation factor P--(R)-beta-lysine ligase (325 aa).

S76 to E78 contributes to the substrate binding site. ATP contacts are provided by residues R100–E102 and N109. Y118 lines the substrate pocket. E244–L245 is a binding site for ATP. Position 251 (E251) interacts with substrate. Residue G300 participates in ATP binding.

It belongs to the class-II aminoacyl-tRNA synthetase family. EpmA subfamily. Homodimer.

It carries out the reaction D-beta-lysine + L-lysyl-[protein] + ATP = N(6)-((3R)-3,6-diaminohexanoyl)-L-lysyl-[protein] + AMP + diphosphate + H(+). With EpmB is involved in the beta-lysylation step of the post-translational modification of translation elongation factor P (EF-P) on 'Lys-34'. Catalyzes the ATP-dependent activation of (R)-beta-lysine produced by EpmB, forming a lysyl-adenylate, from which the beta-lysyl moiety is then transferred to the epsilon-amino group of EF-P 'Lys-34'. The polypeptide is Elongation factor P--(R)-beta-lysine ligase (Escherichia coli O139:H28 (strain E24377A / ETEC)).